Reading from the N-terminus, the 456-residue chain is tRNA modification GTPase MnmE (456 aa).

(6S)-5-formyl-5,6,7,8-tetrahydrofolate contacts are provided by Arg-26, Glu-86, and Arg-125. The region spanning 222–376 (GLSTAIIGRP…IEDRINQLFF (155 aa)) is the TrmE-type G domain. Asn-232 is a K(+) binding site. Residues 232-237 (NVGKSS), 251-257 (TDIEGTT), and 276-279 (DTAG) each bind GTP. Ser-236 contacts Mg(2+). Residues Thr-251, Ile-253, and Thr-256 each coordinate K(+). Position 257 (Thr-257) interacts with Mg(2+). Residue Lys-456 participates in (6S)-5-formyl-5,6,7,8-tetrahydrofolate binding.

It belongs to the TRAFAC class TrmE-Era-EngA-EngB-Septin-like GTPase superfamily. TrmE GTPase family. In terms of assembly, homodimer. Heterotetramer of two MnmE and two MnmG subunits. K(+) serves as cofactor.

The protein localises to the cytoplasm. In terms of biological role, exhibits a very high intrinsic GTPase hydrolysis rate. Involved in the addition of a carboxymethylaminomethyl (cmnm) group at the wobble position (U34) of certain tRNAs, forming tRNA-cmnm(5)s(2)U34. The chain is tRNA modification GTPase MnmE from Streptococcus thermophilus (strain CNRZ 1066).